The primary structure comprises 430 residues: Argininosuccinate lyase (430 aa).

This sequence belongs to the lyase 1 family. Argininosuccinate lyase subfamily.

It is found in the cytoplasm. The catalysed reaction is 2-(N(omega)-L-arginino)succinate = fumarate + L-arginine. Its pathway is amino-acid biosynthesis; L-arginine biosynthesis; L-arginine from L-ornithine and carbamoyl phosphate: step 3/3. The sequence is that of Argininosuccinate lyase from Sorangium cellulosum (strain So ce56) (Polyangium cellulosum (strain So ce56)).